We begin with the raw amino-acid sequence, 498 residues long: ATP synthase subunit beta, chloroplastic (498 aa).

The span at 1-14 shows a compositional bias: polar residues; that stretch reads MRTNPTTSRPGVST. The segment at 1–20 is disordered; sequence MRTNPTTSRPGVSTSEEKST. ATP is bound at residue 172-179; that stretch reads GGAGVGKT.

This sequence belongs to the ATPase alpha/beta chains family. As to quaternary structure, F-type ATPases have 2 components, CF(1) - the catalytic core - and CF(0) - the membrane proton channel. CF(1) has five subunits: alpha(3), beta(3), gamma(1), delta(1), epsilon(1). CF(0) has four main subunits: a(1), b(1), b'(1) and c(9-12).

The protein localises to the plastid. It localises to the chloroplast thylakoid membrane. It carries out the reaction ATP + H2O + 4 H(+)(in) = ADP + phosphate + 5 H(+)(out). Produces ATP from ADP in the presence of a proton gradient across the membrane. The catalytic sites are hosted primarily by the beta subunits. The protein is ATP synthase subunit beta, chloroplastic of Hordeum vulgare (Barley).